The following is a 299-amino-acid chain: ATP phosphoribosyltransferase (299 aa).

The protein belongs to the ATP phosphoribosyltransferase family. Long subfamily. Requires Mg(2+) as cofactor.

It is found in the cytoplasm. The catalysed reaction is 1-(5-phospho-beta-D-ribosyl)-ATP + diphosphate = 5-phospho-alpha-D-ribose 1-diphosphate + ATP. It functions in the pathway amino-acid biosynthesis; L-histidine biosynthesis; L-histidine from 5-phospho-alpha-D-ribose 1-diphosphate: step 1/9. Its activity is regulated as follows. Feedback inhibited by histidine. Its function is as follows. Catalyzes the condensation of ATP and 5-phosphoribose 1-diphosphate to form N'-(5'-phosphoribosyl)-ATP (PR-ATP). Has a crucial role in the pathway because the rate of histidine biosynthesis seems to be controlled primarily by regulation of HisG enzymatic activity. The polypeptide is ATP phosphoribosyltransferase (Shewanella sp. (strain ANA-3)).